The chain runs to 519 residues: Probable DNA ligase (519 aa).

Glu-221 serves as a coordination point for ATP. Lys-223 functions as the N6-AMP-lysine intermediate in the catalytic mechanism. Positions 228, 243, 272, 312, 384, and 390 each coordinate ATP.

It belongs to the ATP-dependent DNA ligase family. Requires Mg(2+) as cofactor.

It carries out the reaction ATP + (deoxyribonucleotide)n-3'-hydroxyl + 5'-phospho-(deoxyribonucleotide)m = (deoxyribonucleotide)n+m + AMP + diphosphate.. DNA ligase that seals nicks in double-stranded DNA during DNA replication, DNA recombination and DNA repair. In Mycolicibacterium paratuberculosis (strain ATCC BAA-968 / K-10) (Mycobacterium paratuberculosis), this protein is Probable DNA ligase.